The chain runs to 115 residues: Con-Ins G1b (115 aa).

Positions 1–24 (MTTSFYFLLMALGLLLYVCQSSFG) are cleaved as a signal peptide. Residues 25–29 (NQHTR) constitute a propeptide that is removed on maturation. 4-hydroxyproline; partial is present on Pro34. 3 cysteine pairs are disulfide-bonded: Cys38–Cys101, Cys50–Cys114, and Cys100–Cys105. Position 41 is a 4-carboxyglutamate (Glu41). The propeptide at 52-94 (RKRNDAGEKRGRASPLWQRRGFLSKLKARAKRNGAFHLPRDGR) is c peptide. Glu98 carries the 4-carboxyglutamate modification. At Pro104 the chain carries 4-hydroxyproline; partial. Glu109 carries the post-translational modification 4-carboxyglutamate; partial. Residue Cys114 is modified to Cysteine amide.

The protein belongs to the insulin family. Heterodimer of A and B chains; disulfide-linked. In terms of tissue distribution, expressed by the venom gland.

It localises to the secreted. Functionally, this venom insulin, from a fish-hunting cone snail, facilitates prey capture by rapidly inducing hypoglycemic shock. It is one of the smallest known insulin found in nature and lacks the C-terminal segment of the B chain that, in human insulin, mediates engagement of the insulin receptor (INSR) and assembly of the hormone's hexameric storage form. Despite lacking this segment, it both binds and activates human insulin receptor (long isoform (HIR-B) of INSR) with only a 10-fold lower potency. In vivo, intraperitoneal injection of this peptide into zebrafish lowers blood glucose with the same potency than human insulin. In addition, when applied to water, this peptide reduces overall locomotor activity of zebrafish larvae, observed as a significant decrease in the percentage of time spent swimming and movement frequency. In Conus geographus (Geography cone), this protein is Con-Ins G1b.